The sequence spans 196 residues: Transmembrane protein 126A (196 aa).

Topologically, residues 1 to 34 (MESHKPSTSKDDLILNIISRKIKQLPESDRNLLE) are mitochondrial matrix. A helical membrane pass occupies residues 35-55 (YGSAYIGLNAAFGGLIANSLF). The Mitochondrial intermembrane segment spans residues 56–57 (RR). A helical membrane pass occupies residues 58 to 78 (ILNVTQARLASSLPMAVIPFL). Topologically, residues 79–106 (TANLSYQSLVSLPLSTGDLNCETCTTTR) are mitochondrial matrix. Residues 107–127 (GALVGLVMGGLYPILLAIPVN) form a helical membrane-spanning segment. Over 128–159 (GGLAARYESSPLPQRGNIFNYWITVSKPVFRK) the chain is Mitochondrial intermembrane. A helical transmembrane segment spans residues 160–176 (MLFPTLLQTVFASYLGS). At 177 to 196 (RQYKLLIKALQLPEPDLEIH) the chain is on the mitochondrial matrix side.

The protein belongs to the TMEM126 family. In terms of assembly, interacts with OXA1L; promoting cotranslational quality control in mitochondria. In terms of tissue distribution, in the retina, significant levels of expression are detected in the ganglion cell layer, the optic nerve head, the outer plexiform layer, and in the outer ellipsoide length of photoreceptor inner segments.

It is found in the mitochondrion inner membrane. Its function is as follows. Protein required for the cotranslational protein quality control in the inner membrane of the mitochondria. Associates with newly synthesized polypeptides and may act as a chaperone that cooperates with OXA1L for the insertion of newly synthesized mitochondrial proteins into the inner membrane. Required for the assembly of the ND4 module of mitochondrial complex I. The chain is Transmembrane protein 126A from Mus musculus (Mouse).